The following is a 255-amino-acid chain: uncharacterized protein (255 aa).

The HTH deoR-type domain maps to 3 to 58 (PVERRQIILEMVAEKGIVSIAELTDRMNVSHMTIRRDLQKLEQQGAVVLVSGGVQS). Residues 20 to 39 (VSIAELTDRMNVSHMTIRRD) constitute a DNA-binding region (H-T-H motif).

This is an uncharacterized protein from Escherichia coli (strain K12).